A 470-amino-acid polypeptide reads, in one-letter code: E3 ubiquitin-protein ligase TRAIP (470 aa).

An RING-type; atypical zinc finger spans residues 7–50; the sequence is CTICSDFFDHSRDVAAIHCGHTFHLQCLIQWFETAPSRTCPQCR. Residues 76–277 adopt a coiled-coil conformation; that stretch reads AEFLKNELDS…RKKLMILQGT (202 aa). The interaction with CYLD stretch occupies residues 211 to 470; the sequence is LKEARKATGE…QPKLDTFLCQ (260 aa). Positions 461–470 match the PIP-box motif; sequence QPKLDTFLCQ.

Belongs to the TRAIP family. Interacts (via PIP-box) with PCNA. Binds TRAF1, TRAF2, TRAF3, TRAF5 and TRAF6 is part of the receptor-TRAF signaling complex. May interact with CYLD; the C-terminus interacts with CYLD, however the interaction was not detected with the full-length protein. Interacts with POLK and POLN. Interacts with UIMC1. Post-translationally, autoubiquitinated. Sumoylated; sumoylation is required for nuclear localization. Sumoylation increases protein stability, possibly by preventing ubiquitination. In terms of tissue distribution, detected in testis and thymus, and at lower levels in spleen.

It localises to the nucleus. The protein localises to the nucleoplasm. Its subcellular location is the nucleolus. The protein resides in the chromosome. It is found in the cytoplasm. It localises to the perinuclear region. It catalyses the reaction S-ubiquitinyl-[E2 ubiquitin-conjugating enzyme]-L-cysteine + [acceptor protein]-L-lysine = [E2 ubiquitin-conjugating enzyme]-L-cysteine + N(6)-ubiquitinyl-[acceptor protein]-L-lysine.. Its pathway is protein modification; protein ubiquitination. Functionally, E3 ubiquitin ligase required to protect genome stability in response to replication stress. Acts as a key regulator of interstrand cross-link repair, which takes place when both strands of duplex DNA are covalently tethered together, thereby blocking replication and transcription. During mitosis, controls the choice between the two pathways of replication-coupled interstrand-cross-link repair by mediating ubiquitination of MCM7 subunit of the CMG helicase complex. Short ubiquitin chains on MCM7 promote recruitment of DNA glycosylase NEIL3. If the interstrand cross-link cannot be cleaved by NEIL3, the ubiquitin chains continue to grow on MCM7, promoting the unloading of the CMG helicase complex by the VCP/p97 ATPase, enabling the Fanconi anemia DNA repair pathway. Only catalyzes ubiquitination of MCM7 when forks converge. Also involved in the repair of covalent DNA-protein cross-links (DPCs) during DNA synthesis: promotes ubiquitination of DPCs, leading to their degradation by the proteasome. Has also been proposed to play a role in promoting translesion synthesis by mediating the assembly of 'Lys-63'-linked poly-ubiquitin chains on the Y-family polymerase POLN in order to facilitate bypass of DNA lesions and preserve genomic integrity. The function in translesion synthesis is however controversial. Acts as a regulator of the spindle assembly checkpoint. Also acts as a negative regulator of innate immune signaling by inhibiting activation of NF-kappa-B mediated by TNF. Negatively regulates TLR3/4- and RIG-I-mediated IRF3 activation and subsequent IFNB1 production and cellular antiviral response by promoting 'Lys-48'-linked polyubiquitination of TNK1 leading to its proteasomal degradation. The chain is E3 ubiquitin-protein ligase TRAIP from Mus musculus (Mouse).